Reading from the N-terminus, the 26-residue chain is Superoxide dismutase [Cu-Zn] (26 aa).

Cys7 carries the S-palmitoyl cysteine lipid modification.

The protein belongs to the Cu-Zn superoxide dismutase family. In terms of assembly, homotrimer. The cofactor is Cu cation. Zn(2+) serves as cofactor.

It is found in the cytoplasm. It localises to the nucleus. It catalyses the reaction 2 superoxide + 2 H(+) = H2O2 + O2. Its function is as follows. Destroys radicals which are normally produced within the cells and which are toxic to biological systems. The polypeptide is Superoxide dismutase [Cu-Zn] (sod1) (Paralichthys olivaceus (Bastard halibut)).